Here is a 604-residue protein sequence, read N- to C-terminus: Elongation factor 4 (604 aa).

A tr-type G domain is found at 7-189 (SRIRNFSIIA…SIVHLVPPPD (183 aa)). GTP is bound by residues 19–24 (DHGKST) and 136–139 (NKID).

The protein belongs to the TRAFAC class translation factor GTPase superfamily. Classic translation factor GTPase family. LepA subfamily.

It is found in the cell inner membrane. The catalysed reaction is GTP + H2O = GDP + phosphate + H(+). Required for accurate and efficient protein synthesis under certain stress conditions. May act as a fidelity factor of the translation reaction, by catalyzing a one-codon backward translocation of tRNAs on improperly translocated ribosomes. Back-translocation proceeds from a post-translocation (POST) complex to a pre-translocation (PRE) complex, thus giving elongation factor G a second chance to translocate the tRNAs correctly. Binds to ribosomes in a GTP-dependent manner. This chain is Elongation factor 4, found in Gloeothece citriformis (strain PCC 7424) (Cyanothece sp. (strain PCC 7424)).